The following is a 586-amino-acid chain: MFS-type transporter ucsD (586 aa).

Positions 1–56 (MSRNSGTTLEDGPLHADPTTEAPNNATVTTNVTANDENTEKEVDADAAAAAPAEAP) are disordered. 2 stretches are compositionally biased toward low complexity: residues 19-36 (TTEAPNNATVTTNVTAND) and 46-56 (DAAAAAPAEAP). N-linked (GlcNAc...) asparagine glycans are attached at residues Asn-25 and Asn-31. The next 8 membrane-spanning stretches (helical) occupy residues 65-85 (WAIVAALAFTALLSSLEGTII), 101-121 (SFIWVPNGYFLATIVMLPLMA), 131-151 (WLTLISVATFTLGSGICGGAN), 164-184 (GFGGGGIALMINIILTDLVPL), 192-212 (GIVQMVSAVGAALGPFLGGLL), 220-240 (WVFYINLPIGGTSLVALFFFL), 263-283 (AIFIASTVSVLIGVTWGGAVY), and 290-310 (VIVPLVLGFFGLGLFVVYEWT). An N-linked (GlcNAc...) asparagine glycan is attached at Asn-324. 6 helical membrane-spanning segments follow: residues 330–350 (VLGVTFLHTVATYWSFYFMPI), 368–388 (LPLFAGIFPFAILGGMLLAKF), 393–413 (PMHLIGMAIITLSFGLFSLLD), 420–440 (AWACFQLLFAVGAGLMIAILL), 458–478 (VWTFVRGFGTVWGVTIPSAIF), and 532–552 (LRTVWYVGVALAGFGWLLIWL).

Belongs to the major facilitator superfamily.

It is found in the membrane. Functionally, MFS-type transporter; part of the gene cluster that mediates the biosynthesis of UCS1025A, a member of the pyrrolizidinone family that acts as a strong telomerase inhibitor and displays potent antibacterial and antitumor properties. These compounds share a hemiaminal-containing pyrrolizidinone core fused with a gamma-lactone, giving a furopyrrolizidine that is connected to a decalin fragment. This is MFS-type transporter ucsD from Acremonium sp.